The chain runs to 282 residues: uncharacterized protein (282 aa).

Residues 22 to 42 (YLFTLGSFVTMFFVLCISPVF) form a helical membrane-spanning segment.

It is found in the cell membrane. This is an uncharacterized protein from Bacillus anthracis.